The primary structure comprises 565 residues: Probable beta-glucosidase btgE (565 aa).

A signal peptide spans 1–18; the sequence is MRGAILATAAALAGTAMA. Positions 246–304 are disordered; the sequence is TGQDEPTSAPAAPSTTAVPATTTAAPETTTAAPDTTTAVPSTSSAAPSSSSTAPASTGA. Residues 251–304 show a composition bias toward low complexity; that stretch reads PTSAPAAPSTTAVPATTTAAPETTTAAPDTTTAVPSTSSAAPSSSSTAPASTGA. The active-site Proton donor is the E405. Residue E501 is the Nucleophile of the active site.

It belongs to the glycosyl hydrolase 17 family.

The protein resides in the secreted. It localises to the cell wall. The catalysed reaction is Hydrolysis of terminal, non-reducing beta-D-glucosyl residues with release of beta-D-glucose.. It participates in glycan metabolism; cellulose degradation. Beta-glucosidases are one of a number of cellulolytic enzymes involved in the degradation of cellulosic biomass. Catalyzes the last step releasing glucose from the inhibitory cellobiose. The chain is Probable beta-glucosidase btgE (btgE) from Aspergillus fumigatus (strain CBS 144.89 / FGSC A1163 / CEA10) (Neosartorya fumigata).